The chain runs to 890 residues: Translation initiation factor IF-2 (890 aa).

Residues 45–304 (LIDHLNQKNS…LQQGFQKPAQ (260 aa)) form a disordered region. Residues 67 to 81 (STLNIPGTGGKSKSV) show a composition bias toward polar residues. The segment covering 92 to 217 (VKRDPQEAER…RMAEENKWTD (126 aa)) has biased composition (basic and acidic residues). Residues 252–266 (GRGRNAKAARPKKGN) show a composition bias toward basic residues. Over residues 267-280 (KHAESKADREEARA) the composition is skewed to basic and acidic residues. Positions 389–558 (PRAPVVTIMG…LLQAEVLELK (170 aa)) constitute a tr-type G domain. Residues 398 to 405 (GHVDHGKT) form a G1 region. GTP is bound at residue 398-405 (GHVDHGKT). The tract at residues 423–427 (GITQH) is G2. Positions 444–447 (DTPG) are G3. Residues 444-448 (DTPGH) and 498-501 (NKID) each bind GTP. The interval 498–501 (NKID) is G4. Positions 534–536 (SAK) are G5. N6-acetyllysine is present on Lys808.

It belongs to the TRAFAC class translation factor GTPase superfamily. Classic translation factor GTPase family. IF-2 subfamily.

The protein localises to the cytoplasm. One of the essential components for the initiation of protein synthesis. Protects formylmethionyl-tRNA from spontaneous hydrolysis and promotes its binding to the 30S ribosomal subunits. Also involved in the hydrolysis of GTP during the formation of the 70S ribosomal complex. This chain is Translation initiation factor IF-2, found in Escherichia coli O127:H6 (strain E2348/69 / EPEC).